Here is a 1517-residue protein sequence, read N- to C-terminus: Dual oxidase 2 (1517 aa).

Positions methionine 1 to glycine 25 are cleaved as a signal peptide. At glutamine 26–glycine 599 the chain is on the extracellular side. Positions serine 30–alanine 596 are peroxidase-like; mediates peroxidase activity. Residues asparagine 100, asparagine 348, asparagine 455, and asparagine 537 are each glycosylated (N-linked (GlcNAc...) asparagine). A disulfide bond links cysteine 124 and cysteine 1131. The chain crosses the membrane as a helical span at residues valine 600–alanine 620. At arginine 621–histidine 1010 the chain is on the cytoplasmic side. EF-hand domains are found at residues proline 819–glycine 854, serine 855–isoleucine 890, and glutamine 899–aspartate 934. Ca(2+)-binding residues include aspartate 832, aspartate 834, asparagine 836, tyrosine 838, glutamate 843, aspartate 868, aspartate 870, asparagine 872, and glutamate 879. The tract at residues arginine 960 to serine 1214 is interaction with TXNDC11. The helical transmembrane segment at isoleucine 1011–tyrosine 1031 threads the bilayer. The Extracellular segment spans residues tyrosine 1032–tyrosine 1046. Residues valine 1047–leucine 1067 form a helical membrane-spanning segment. The 183-residue stretch at arginine 1053–serine 1235 folds into the Ferric oxidoreductase domain. Residues leucine 1068–alanine 1100 are Cytoplasmic-facing. A helical transmembrane segment spans residues methionine 1101–phenylalanine 1121. The Extracellular segment spans residues serine 1122–glutamate 1154. The chain crosses the membrane as a helical span at residues threonine 1155 to alanine 1175. Topologically, residues serine 1176 to arginine 1185 are cytoplasmic. A helical transmembrane segment spans residues glycine 1186–serine 1206. A topological domain (extracellular) is located at residue tyrosine 1207. A helical transmembrane segment spans residues alanine 1208 to glycine 1228. Topologically, residues aspartate 1229 to phenylalanine 1517 are cytoplasmic. In terms of domain architecture, FAD-binding FR-type spans arginine 1236–glutamate 1342.

This sequence in the N-terminal section; belongs to the peroxidase family. Heterodimer with DUOXA2; disulfide-linked. Interacts with TXNDC11, TPO and CYBA. N-glycosylated. Expressed in colon, duodenum, rectum and thyroid.

It is found in the apical cell membrane. The protein resides in the cell junction. The catalysed reaction is NADH + O2 + H(+) = H2O2 + NAD(+). It catalyses the reaction NADPH + O2 + H(+) = H2O2 + NADP(+). It functions in the pathway hormone biosynthesis; thyroid hormone biosynthesis. With respect to regulation, the NADPH oxidase activity is calcium-dependent. Peroxidase activity is inhibited by aminobenzohydrazide. Its function is as follows. Generates hydrogen peroxide which is required for the activity of thyroid peroxidase/TPO and lactoperoxidase/LPO. Plays a role in thyroid hormones synthesis and lactoperoxidase-mediated antimicrobial defense at the surface of mucosa. May have its own peroxidase activity through its N-terminal peroxidase-like domain. This is Dual oxidase 2 (Duox2) from Rattus norvegicus (Rat).